We begin with the raw amino-acid sequence, 118 residues long: Large ribosomal subunit protein uL24 (118 aa).

Belongs to the universal ribosomal protein uL24 family. Part of the 50S ribosomal subunit.

Its function is as follows. One of two assembly initiator proteins, it binds directly to the 5'-end of the 23S rRNA, where it nucleates assembly of the 50S subunit. In terms of biological role, one of the proteins that surrounds the polypeptide exit tunnel on the outside of the subunit. In Prochlorococcus marinus (strain SARG / CCMP1375 / SS120), this protein is Large ribosomal subunit protein uL24.